A 211-amino-acid chain; its full sequence is tRNA (pseudouridine(54)-N(1))-methyltransferase (211 aa).

S-adenosyl-L-methionine is bound by residues Leu-128, Gly-150, and Cys-183.

Belongs to the methyltransferase superfamily. TrmY family. In terms of assembly, homodimer.

Its subcellular location is the cytoplasm. The catalysed reaction is pseudouridine(54) in tRNA + S-adenosyl-L-methionine = N(1)-methylpseudouridine(54) in tRNA + S-adenosyl-L-homocysteine + H(+). In terms of biological role, specifically catalyzes the N1-methylation of pseudouridine at position 54 (Psi54) in tRNAs. The chain is tRNA (pseudouridine(54)-N(1))-methyltransferase from Methanosarcina acetivorans (strain ATCC 35395 / DSM 2834 / JCM 12185 / C2A).